We begin with the raw amino-acid sequence, 128 residues long: Fluoride-specific ion channel FluC (128 aa).

4 helical membrane passes run 5-25 (IVAI…LGLA), 35-55 (LGTL…AVVF), 67-87 (LFVI…SVEV), and 96-116 (FGWA…LTAL). Positions 75 and 78 each coordinate Na(+).

It belongs to the fluoride channel Fluc/FEX (TC 1.A.43) family.

The protein localises to the cell inner membrane. It catalyses the reaction fluoride(in) = fluoride(out). Its activity is regulated as follows. Na(+) is not transported, but it plays an essential structural role and its presence is essential for fluoride channel function. Its function is as follows. Fluoride-specific ion channel. Important for reducing fluoride concentration in the cell, thus reducing its toxicity. The polypeptide is Fluoride-specific ion channel FluC (Burkholderia vietnamiensis (strain G4 / LMG 22486) (Burkholderia cepacia (strain R1808))).